The following is a 304-amino-acid chain: Acetylxylan esterase A (304 aa).

The signal sequence occupies residues 1-24; sequence MLLSTHLLFVITTLVTSLLHPIDG. S148 (charge relay system) is an active-site residue. A glycan (N-linked (GlcNAc...) asparagine) is linked at N190.

This sequence belongs to the carbohydrate esterase 1 (CE1) family. AxeA subfamily. Monomer.

It is found in the secreted. The enzyme catalyses Deacetylation of xylans and xylo-oligosaccharides.. Its pathway is glycan degradation; xylan degradation. With respect to regulation, inactivated by di-isopropylfluorophosphate and phenylmethylsulfonylfluorid (PMSF), a specific inhibitor of serine esterases. In terms of biological role, acetylxylan esterase involved in the hydrolysis of xylan, a major structural heterogeneous polysaccharide found in plant biomass representing the second most abundant polysaccharide in the biosphere, after cellulose. Degrades acetylated xylans by cleaving acetyl side groups from the hetero-xylan backbone. This chain is Acetylxylan esterase A (axeA), found in Aspergillus awamori (Black koji mold).